A 174-amino-acid chain; its full sequence is Inosine/xanthosine triphosphatase (174 aa).

Asp68 contacts Mg(2+). Position 68 to 69 (Asp68 to Ala69) interacts with substrate.

Belongs to the YjjX NTPase family. In terms of assembly, homodimer. It depends on Mg(2+) as a cofactor. The cofactor is Mn(2+).

It catalyses the reaction XTP + H2O = XDP + phosphate + H(+). The catalysed reaction is ITP + H2O = IDP + phosphate + H(+). In terms of biological role, phosphatase that hydrolyzes non-canonical purine nucleotides such as XTP and ITP to their respective diphosphate derivatives. Probably excludes non-canonical purines from DNA/RNA precursor pool, thus preventing their incorporation into DNA/RNA and avoiding chromosomal lesions. This Photobacterium profundum (strain SS9) protein is Inosine/xanthosine triphosphatase.